The following is a 332-amino-acid chain: Biotin synthase (332 aa).

The Radical SAM core domain occupies 46–275; sequence SDIQRASLLS…RARVRLSAGR (230 aa). Residues C61, C65, and C68 each contribute to the [4Fe-4S] cluster site. Residues C106, C138, C198, and R270 each coordinate [2Fe-2S] cluster.

It belongs to the radical SAM superfamily. Biotin synthase family. Homodimer. [4Fe-4S] cluster is required as a cofactor. The cofactor is [2Fe-2S] cluster.

The enzyme catalyses (4R,5S)-dethiobiotin + (sulfur carrier)-SH + 2 reduced [2Fe-2S]-[ferredoxin] + 2 S-adenosyl-L-methionine = (sulfur carrier)-H + biotin + 2 5'-deoxyadenosine + 2 L-methionine + 2 oxidized [2Fe-2S]-[ferredoxin]. It functions in the pathway cofactor biosynthesis; biotin biosynthesis; biotin from 7,8-diaminononanoate: step 2/2. Its function is as follows. Catalyzes the conversion of dethiobiotin (DTB) to biotin by the insertion of a sulfur atom into dethiobiotin via a radical-based mechanism. The protein is Biotin synthase of Methylobacterium sp. (strain 4-46).